A 376-amino-acid polypeptide reads, in one-letter code: Methylthioribose-1-phosphate isomerase (376 aa).

The active-site Proton donor is the Asp-256.

The protein belongs to the eIF-2B alpha/beta/delta subunits family. MtnA subfamily.

The protein localises to the cytoplasm. It localises to the nucleus. It carries out the reaction 5-(methylsulfanyl)-alpha-D-ribose 1-phosphate = 5-(methylsulfanyl)-D-ribulose 1-phosphate. It participates in amino-acid biosynthesis; L-methionine biosynthesis via salvage pathway; L-methionine from S-methyl-5-thio-alpha-D-ribose 1-phosphate: step 1/6. Its function is as follows. Catalyzes the interconversion of methylthioribose-1-phosphate (MTR-1-P) into methylthioribulose-1-phosphate (MTRu-1-P). In Vitis vinifera (Grape), this protein is Methylthioribose-1-phosphate isomerase.